The following is a 247-amino-acid chain: uncharacterized protein (247 aa).

Residues 225–247 (LASAPVPPSGSGNSGHRRANLGL) form a disordered region.

This is an uncharacterized protein from Methanocaldococcus jannaschii (strain ATCC 43067 / DSM 2661 / JAL-1 / JCM 10045 / NBRC 100440) (Methanococcus jannaschii).